The chain runs to 371 residues: DNA replication and repair protein RecF (371 aa).

An ATP-binding site is contributed by Gly30–Thr37.

This sequence belongs to the RecF family.

It is found in the cytoplasm. Functionally, the RecF protein is involved in DNA metabolism; it is required for DNA replication and normal SOS inducibility. RecF binds preferentially to single-stranded, linear DNA. It also seems to bind ATP. This Chlorobium phaeovibrioides (strain DSM 265 / 1930) (Prosthecochloris vibrioformis (strain DSM 265)) protein is DNA replication and repair protein RecF.